Reading from the N-terminus, the 68-residue chain is Phage-like element PBSX protein XtrA (68 aa).

To B.subtilis YqaO.

The sequence is that of Phage-like element PBSX protein XtrA (xtrA) from Bacillus subtilis (strain 168).